We begin with the raw amino-acid sequence, 227 residues long: Cytochrome c oxidase subunit 2 (227 aa).

Topologically, residues 1–14 (MAYPFQLGLQDATS) are mitochondrial intermembrane. Residues 15 to 45 (PIMEELTNFHDHTLMIVFLISSLVLYIISLM) form a helical membrane-spanning segment. The Mitochondrial matrix portion of the chain corresponds to 46–59 (LTTKLTHTSTMDAQ). The helical transmembrane segment at 60 to 87 (EVETIWTILPAVILILIALPSLRILYMM) threads the bilayer. At 88–227 (DEINNPVLTV…YFENWSASMI (140 aa)) the chain is on the mitochondrial intermembrane side. Positions 161, 196, 198, 200, 204, and 207 each coordinate Cu cation. Glu-198 provides a ligand contact to Mg(2+). Tyr-218 is subject to Phosphotyrosine.

Belongs to the cytochrome c oxidase subunit 2 family. In terms of assembly, component of the cytochrome c oxidase (complex IV, CIV), a multisubunit enzyme composed of 14 subunits. The complex is composed of a catalytic core of 3 subunits MT-CO1, MT-CO2 and MT-CO3, encoded in the mitochondrial DNA, and 11 supernumerary subunits COX4I, COX5A, COX5B, COX6A, COX6B, COX6C, COX7A, COX7B, COX7C, COX8 and NDUFA4, which are encoded in the nuclear genome. The complex exists as a monomer or a dimer and forms supercomplexes (SCs) in the inner mitochondrial membrane with NADH-ubiquinone oxidoreductase (complex I, CI) and ubiquinol-cytochrome c oxidoreductase (cytochrome b-c1 complex, complex III, CIII), resulting in different assemblies (supercomplex SCI(1)III(2)IV(1) and megacomplex MCI(2)III(2)IV(2)). Found in a complex with TMEM177, COA6, COX18, COX20, SCO1 and SCO2. Interacts with TMEM177 in a COX20-dependent manner. Interacts with COX20. Interacts with COX16. Requires Cu cation as cofactor.

Its subcellular location is the mitochondrion inner membrane. It carries out the reaction 4 Fe(II)-[cytochrome c] + O2 + 8 H(+)(in) = 4 Fe(III)-[cytochrome c] + 2 H2O + 4 H(+)(out). Its function is as follows. Component of the cytochrome c oxidase, the last enzyme in the mitochondrial electron transport chain which drives oxidative phosphorylation. The respiratory chain contains 3 multisubunit complexes succinate dehydrogenase (complex II, CII), ubiquinol-cytochrome c oxidoreductase (cytochrome b-c1 complex, complex III, CIII) and cytochrome c oxidase (complex IV, CIV), that cooperate to transfer electrons derived from NADH and succinate to molecular oxygen, creating an electrochemical gradient over the inner membrane that drives transmembrane transport and the ATP synthase. Cytochrome c oxidase is the component of the respiratory chain that catalyzes the reduction of oxygen to water. Electrons originating from reduced cytochrome c in the intermembrane space (IMS) are transferred via the dinuclear copper A center (CU(A)) of subunit 2 and heme A of subunit 1 to the active site in subunit 1, a binuclear center (BNC) formed by heme A3 and copper B (CU(B)). The BNC reduces molecular oxygen to 2 water molecules using 4 electrons from cytochrome c in the IMS and 4 protons from the mitochondrial matrix. This Rattus norvegicus (Rat) protein is Cytochrome c oxidase subunit 2.